Reading from the N-terminus, the 760-residue chain is Xaa-Pro dipeptidyl-peptidase (760 aa).

Active-site charge relay system residues include S349, D469, and H499.

The protein belongs to the peptidase S15 family. In terms of assembly, homodimer.

The protein localises to the cytoplasm. It carries out the reaction Hydrolyzes Xaa-Pro-|- bonds to release unblocked, N-terminal dipeptides from substrates including Ala-Pro-|-p-nitroanilide and (sequentially) Tyr-Pro-|-Phe-Pro-|-Gly-Pro-|-Ile.. Functionally, removes N-terminal dipeptides sequentially from polypeptides having unsubstituted N-termini provided that the penultimate residue is proline. This Streptococcus pyogenes serotype M4 (strain MGAS10750) protein is Xaa-Pro dipeptidyl-peptidase.